We begin with the raw amino-acid sequence, 548 residues long: CTP synthase (548 aa).

Residues 1 to 270 are amidoligase domain; sequence MTKYVFVTGG…DNIVCEALGL (270 aa). S13 provides a ligand contact to CTP. S13 lines the UTP pocket. Residues 14-19 and D71 contribute to the ATP site; that span reads SLGKGI. Positions 71 and 144 each coordinate Mg(2+). Residues 151–153, 191–196, and K227 contribute to the CTP site; these read DIE and KTKPTQ. UTP is bound by residues 191–196 and K227; that span reads KTKPTQ. In terms of domain architecture, Glutamine amidotransferase type-1 spans 295–545; it reads TIGMVGKYVD…IEAAIANHAR (251 aa). Residue G356 coordinates L-glutamine. The Nucleophile; for glutamine hydrolysis role is filled by C383. L-glutamine-binding positions include 384-387, E407, and R473; that span reads LGMQ. Active-site residues include H518 and E520.

This sequence belongs to the CTP synthase family. In terms of assembly, homotetramer.

The enzyme catalyses UTP + L-glutamine + ATP + H2O = CTP + L-glutamate + ADP + phosphate + 2 H(+). The catalysed reaction is L-glutamine + H2O = L-glutamate + NH4(+). It catalyses the reaction UTP + NH4(+) + ATP = CTP + ADP + phosphate + 2 H(+). The protein operates within pyrimidine metabolism; CTP biosynthesis via de novo pathway; CTP from UDP: step 2/2. With respect to regulation, allosterically activated by GTP, when glutamine is the substrate; GTP has no effect on the reaction when ammonia is the substrate. The allosteric effector GTP functions by stabilizing the protein conformation that binds the tetrahedral intermediate(s) formed during glutamine hydrolysis. Inhibited by the product CTP, via allosteric rather than competitive inhibition. Functionally, catalyzes the ATP-dependent amination of UTP to CTP with either L-glutamine or ammonia as the source of nitrogen. Regulates intracellular CTP levels through interactions with the four ribonucleotide triphosphates. In Bordetella petrii (strain ATCC BAA-461 / DSM 12804 / CCUG 43448), this protein is CTP synthase.